Consider the following 456-residue polypeptide: Bifunctional protein GlmU (456 aa).

The segment at 1 to 229 is pyrophosphorylase; that stretch reads MTKKALSAVI…VMEVEGANNR (229 aa). UDP-N-acetyl-alpha-D-glucosamine-binding positions include 11–14, Lys-25, Gln-76, 81–82, 103–105, Gly-140, Glu-154, Asn-169, and Asn-227; these read LAAG, GT, and YGD. Mg(2+) is bound at residue Asp-105. Asn-227 is a binding site for Mg(2+). Positions 230-250 are linker; that stretch reads LQLAALERYLQNKQASKLLLE. The tract at residues 251 to 456 is N-acetyltransferase; it reads GVMIYDPARF…QGWQRPIKKK (206 aa). Residues Arg-333 and Lys-351 each coordinate UDP-N-acetyl-alpha-D-glucosamine. Residue His-363 is the Proton acceptor of the active site. Positions 366 and 377 each coordinate UDP-N-acetyl-alpha-D-glucosamine. Acetyl-CoA contacts are provided by residues Ala-380, 386–387, Ser-405, Ala-423, and Arg-440; that span reads NY.

The protein in the N-terminal section; belongs to the N-acetylglucosamine-1-phosphate uridyltransferase family. It in the C-terminal section; belongs to the transferase hexapeptide repeat family. Homotrimer. Mg(2+) is required as a cofactor.

It is found in the cytoplasm. It catalyses the reaction alpha-D-glucosamine 1-phosphate + acetyl-CoA = N-acetyl-alpha-D-glucosamine 1-phosphate + CoA + H(+). The enzyme catalyses N-acetyl-alpha-D-glucosamine 1-phosphate + UTP + H(+) = UDP-N-acetyl-alpha-D-glucosamine + diphosphate. It participates in nucleotide-sugar biosynthesis; UDP-N-acetyl-alpha-D-glucosamine biosynthesis; N-acetyl-alpha-D-glucosamine 1-phosphate from alpha-D-glucosamine 6-phosphate (route II): step 2/2. Its pathway is nucleotide-sugar biosynthesis; UDP-N-acetyl-alpha-D-glucosamine biosynthesis; UDP-N-acetyl-alpha-D-glucosamine from N-acetyl-alpha-D-glucosamine 1-phosphate: step 1/1. It functions in the pathway bacterial outer membrane biogenesis; LPS lipid A biosynthesis. Its function is as follows. Catalyzes the last two sequential reactions in the de novo biosynthetic pathway for UDP-N-acetylglucosamine (UDP-GlcNAc). The C-terminal domain catalyzes the transfer of acetyl group from acetyl coenzyme A to glucosamine-1-phosphate (GlcN-1-P) to produce N-acetylglucosamine-1-phosphate (GlcNAc-1-P), which is converted into UDP-GlcNAc by the transfer of uridine 5-monophosphate (from uridine 5-triphosphate), a reaction catalyzed by the N-terminal domain. The protein is Bifunctional protein GlmU of Haemophilus influenzae (strain PittEE).